The chain runs to 790 residues: Kinesin-like protein KIF9 (790 aa).

Residues 6–340 (KVHAFVRVKP…LRFASRMKLV (335 aa)) enclose the Kinesin motor domain. Residues 12-14 (RVK) and 93-100 (GQTGAGKT) each bind ATP. Residues 342–380 (TEPAINEKYDAERMVKNLEKELALLKQELAIHDSLTNRT) adopt a coiled-coil conformation. The disordered stretch occupies residues 477–578 (QNFGLGVAPF…IRPDTPPSKP (102 aa)). Over residues 525-534 (VSTSKTQLVP) the composition is skewed to polar residues. Threonine 530 is subject to Phosphothreonine. Composition is skewed to basic and acidic residues over residues 537 to 552 (KDGD…RETS) and 561 to 570 (SPKEELRPIR). Position 546 is a phosphoserine (serine 546). A coiled-coil region spans residues 658–690 (LLILKLKDLKKQYRSEYQDLRDLRAEIQYCQHL).

It belongs to the TRAFAC class myosin-kinesin ATPase superfamily. Kinesin family. In terms of assembly, interacts with HYDIN.

It localises to the cytoplasm. Its subcellular location is the cytoskeleton. The protein resides in the cell projection. The protein localises to the cilium. It is found in the flagellum. It localises to the flagellum axoneme. Essential for normal male fertility and for progressive motility of spermatozoa. This chain is Kinesin-like protein KIF9 (KIF9), found in Homo sapiens (Human).